The sequence spans 230 residues: Large ribosomal subunit protein uL1 (230 aa).

This sequence belongs to the universal ribosomal protein uL1 family. Part of the 50S ribosomal subunit.

Binds directly to 23S rRNA. The L1 stalk is quite mobile in the ribosome, and is involved in E site tRNA release. In terms of biological role, protein L1 is also a translational repressor protein, it controls the translation of the L11 operon by binding to its mRNA. This Limosilactobacillus reuteri subsp. reuteri (strain JCM 1112) (Lactobacillus reuteri) protein is Large ribosomal subunit protein uL1.